The chain runs to 227 residues: Orotidine 5'-phosphate decarboxylase (227 aa).

Substrate contacts are provided by residues Asp-8, Lys-30, 58 to 67, Thr-117, Arg-177, Gln-186, Gly-206, and Arg-207; that span reads DLKLYDIPNT. The Proton donor role is filled by Lys-60.

It belongs to the OMP decarboxylase family. Type 1 subfamily. In terms of assembly, homodimer.

It catalyses the reaction orotidine 5'-phosphate + H(+) = UMP + CO2. Its pathway is pyrimidine metabolism; UMP biosynthesis via de novo pathway; UMP from orotate: step 2/2. In terms of biological role, catalyzes the decarboxylation of orotidine 5'-monophosphate (OMP) to uridine 5'-monophosphate (UMP). This is Orotidine 5'-phosphate decarboxylase from Campylobacter lari (strain RM2100 / D67 / ATCC BAA-1060).